We begin with the raw amino-acid sequence, 393 residues long: Glutamyl-tRNA reductase (393 aa).

Substrate is bound by residues T47–R50, S98, E103–D105, and Q109. The active-site Nucleophile is the C48. G177–G182 is an NADP(+) binding site.

Belongs to the glutamyl-tRNA reductase family. In terms of assembly, homodimer.

The catalysed reaction is (S)-4-amino-5-oxopentanoate + tRNA(Glu) + NADP(+) = L-glutamyl-tRNA(Glu) + NADPH + H(+). It functions in the pathway porphyrin-containing compound metabolism; protoporphyrin-IX biosynthesis; 5-aminolevulinate from L-glutamyl-tRNA(Glu): step 1/2. Its function is as follows. Catalyzes the NADPH-dependent reduction of glutamyl-tRNA(Glu) to glutamate 1-semialdehyde (GSA). This is Glutamyl-tRNA reductase from Pyrobaculum islandicum (strain DSM 4184 / JCM 9189 / GEO3).